Here is an 894-residue protein sequence, read N- to C-terminus: MTQYTPMIQQYLKVKADYQDAFLFFRLGDFYEMFFEDAVKAAHELEITLTSRDGGSSERIPMCGVPYHAAKNYIEQLVEKGYKVAVCEQVEDPKTAKGVVRREVVQLITPGTMMEGRTIDEKENNFLAALTHFEDGSYALACNDLTTGQNTVTLLTGSVEDILLEVYATGSKEIVVDSSFSKDELNKLTETLKMTISYEDATAIPEGLEHLVKNVSQAKLIKAVGRLFNYVIRTQKRSLDHLQPVEIYYTNQFMKIDVHSKRNLELTETLRTKEKTGSLLWLLDKTKTAMGGRMLKQWMERPLIQKERIEERLEMVETFVNDYFLREDLKEKLKEVYDLERLAGKVAFGNVNARDLLQLRRSLLQVPAILEAISLLDNAYAARLIQGADPCESLTELLGRSIQENPPLSIKDGDIIKDGYNDKLDQYRYVSKNGKTWIAELEKRERDITGIKSLKIGYNRIFGYYIEVTKANLGALPEGRYERKQTLANAERFITDELKEKETLILEAEEKIVQLEYDLFTALREEVKVFIPKLQHLAKVISELDVLQSFATVSEEEQFVKPVLTTKREIFIKDGRHPVVEKVLNGKLYVPNDCIMPEKMDVFLITGPNMSGKSTYMRQLALVTVMSQIGCFVPATEAVLPVFDQIFTRIGAADDLISGQSTFMVEMLEAKNAIANASERSLILFDEIGRGTSTYDGMALAQAIIEHIHDQIGAKTLFSTHYHELTVLEDSLDQLKNVHVSAIEENGKVVFLHKIQDGAADKSYGIHVAQLAELPDSLIARAKEVLAQLEGQEEIIIPKRVEVKAQEQEQEVIPEPIVVKEEPVEIEETKVDNEEESQLSFFGAEHSSKKQDKPVLDAKETAVLSQIKKIDLLDMTPLEAMNELYRLQKKLKKG.

607–614 (GPNMSGKS) lines the ATP pocket.

This sequence belongs to the DNA mismatch repair MutS family.

Its function is as follows. This protein is involved in the repair of mismatches in DNA. It is possible that it carries out the mismatch recognition step. This protein has a weak ATPase activity. This chain is DNA mismatch repair protein MutS, found in Bacillus cereus (strain ZK / E33L).